The chain runs to 312 residues: Malate dehydrogenase (312 aa).

Residues 7–13 and Asp34 each bind NAD(+); that span reads GAAGGIG. Substrate contacts are provided by Arg81 and Arg87. Residues Asn94 and 117 to 119 each bind NAD(+); that span reads ITN. Residues Asn119 and Arg153 each contribute to the substrate site. His177 serves as the catalytic Proton acceptor. Residue Met227 participates in NAD(+) binding.

The protein belongs to the LDH/MDH superfamily. MDH type 1 family. In terms of assembly, homodimer.

The catalysed reaction is (S)-malate + NAD(+) = oxaloacetate + NADH + H(+). Functionally, catalyzes the reversible oxidation of malate to oxaloacetate. In Escherichia coli O139:H28 (strain E24377A / ETEC), this protein is Malate dehydrogenase.